Consider the following 84-residue polypeptide: UPF0298 protein NWMN_0985 (84 aa).

Belongs to the UPF0298 family.

The protein localises to the cytoplasm. The protein is UPF0298 protein NWMN_0985 of Staphylococcus aureus (strain Newman).